The primary structure comprises 452 residues: Bifunctional protein GlmU (452 aa).

The pyrophosphorylase stretch occupies residues 1-226 (MSLTTVILAA…PMEVEGANNR (226 aa)). UDP-N-acetyl-alpha-D-glucosamine contacts are provided by residues 8 to 11 (LAAG), lysine 22, glutamine 73, 78 to 79 (GT), 100 to 102 (YGD), glycine 137, glutamate 151, asparagine 166, and asparagine 224. Residue aspartate 102 participates in Mg(2+) binding. Residue asparagine 224 participates in Mg(2+) binding. The linker stretch occupies residues 227-247 (IQLAGLERAYQAWQAQELMLN). Residues 248-452 (GATLADPARI…LDGWKRPVKK (205 aa)) are N-acetyltransferase. UDP-N-acetyl-alpha-D-glucosamine-binding residues include arginine 330 and lysine 348. Histidine 360 functions as the Proton acceptor in the catalytic mechanism. Tyrosine 363 and asparagine 374 together coordinate UDP-N-acetyl-alpha-D-glucosamine. Acetyl-CoA-binding positions include alanine 377, 383 to 384 (NY), serine 402, alanine 420, and arginine 437.

In the N-terminal section; belongs to the N-acetylglucosamine-1-phosphate uridyltransferase family. It in the C-terminal section; belongs to the transferase hexapeptide repeat family. As to quaternary structure, homotrimer. The cofactor is Mg(2+).

It is found in the cytoplasm. The enzyme catalyses alpha-D-glucosamine 1-phosphate + acetyl-CoA = N-acetyl-alpha-D-glucosamine 1-phosphate + CoA + H(+). It carries out the reaction N-acetyl-alpha-D-glucosamine 1-phosphate + UTP + H(+) = UDP-N-acetyl-alpha-D-glucosamine + diphosphate. It participates in nucleotide-sugar biosynthesis; UDP-N-acetyl-alpha-D-glucosamine biosynthesis; N-acetyl-alpha-D-glucosamine 1-phosphate from alpha-D-glucosamine 6-phosphate (route II): step 2/2. Its pathway is nucleotide-sugar biosynthesis; UDP-N-acetyl-alpha-D-glucosamine biosynthesis; UDP-N-acetyl-alpha-D-glucosamine from N-acetyl-alpha-D-glucosamine 1-phosphate: step 1/1. The protein operates within bacterial outer membrane biogenesis; LPS lipid A biosynthesis. Its function is as follows. Catalyzes the last two sequential reactions in the de novo biosynthetic pathway for UDP-N-acetylglucosamine (UDP-GlcNAc). The C-terminal domain catalyzes the transfer of acetyl group from acetyl coenzyme A to glucosamine-1-phosphate (GlcN-1-P) to produce N-acetylglucosamine-1-phosphate (GlcNAc-1-P), which is converted into UDP-GlcNAc by the transfer of uridine 5-monophosphate (from uridine 5-triphosphate), a reaction catalyzed by the N-terminal domain. This is Bifunctional protein GlmU from Pseudoalteromonas translucida (strain TAC 125).